A 545-amino-acid chain; its full sequence is Chaperonin GroEL (545 aa).

ATP is bound by residues 30–33, Lys-51, 87–91, Gly-415, and Asp-495; these read TLGP and DGTTT.

It belongs to the chaperonin (HSP60) family. As to quaternary structure, forms a cylinder of 14 subunits composed of two heptameric rings stacked back-to-back. Interacts with the co-chaperonin GroES.

It localises to the cytoplasm. It catalyses the reaction ATP + H2O + a folded polypeptide = ADP + phosphate + an unfolded polypeptide.. In terms of biological role, together with its co-chaperonin GroES, plays an essential role in assisting protein folding. The GroEL-GroES system forms a nano-cage that allows encapsulation of the non-native substrate proteins and provides a physical environment optimized to promote and accelerate protein folding. The sequence is that of Chaperonin GroEL from Shewanella amazonensis (strain ATCC BAA-1098 / SB2B).